The following is a 343-amino-acid chain: Ribosomal RNA small subunit methyltransferase C (343 aa).

Belongs to the methyltransferase superfamily. RsmC family. As to quaternary structure, monomer.

The protein localises to the cytoplasm. It catalyses the reaction guanosine(1207) in 16S rRNA + S-adenosyl-L-methionine = N(2)-methylguanosine(1207) in 16S rRNA + S-adenosyl-L-homocysteine + H(+). Its function is as follows. Specifically methylates the guanine in position 1207 of 16S rRNA in the 30S particle. In Escherichia coli O8 (strain IAI1), this protein is Ribosomal RNA small subunit methyltransferase C.